A 340-amino-acid polypeptide reads, in one-letter code: Probable allantoicase (340 aa).

Belongs to the allantoicase family.

The catalysed reaction is allantoate + H2O = (S)-ureidoglycolate + urea. The protein operates within nitrogen metabolism; (S)-allantoin degradation; (S)-ureidoglycolate from allantoate (aminidohydrolase route): step 1/1. The sequence is that of Probable allantoicase from Rhizobium meliloti (strain 1021) (Ensifer meliloti).